The following is a 521-amino-acid chain: Cytochrome P450 monooxygenase 105 (521 aa).

The helical transmembrane segment at 12–32 (GVASPATLAVAAVTFLTALVL) threads the bilayer. Asn-218, Asn-274, and Asn-317 each carry an N-linked (GlcNAc...) asparagine glycan. Residue Cys-449 coordinates heme.

It belongs to the cytochrome P450 family. Heme is required as a cofactor.

It is found in the membrane. The protein operates within secondary metabolite biosynthesis. Functionally, cytochrome P450 monooxygenase that is able to use anthracene, carbazole, pyrene, phenanthrene and trans-stilbene as substrates for oxidation. These multifunctional properties against a series of polycyclic aromatic hydrocarbons (PAHs) suggest that CYP105 would play important roles, at least in part, in fungal metabolic systems involved in xenobiotic detoxification. The polypeptide is Cytochrome P450 monooxygenase 105 (Postia placenta (strain ATCC 44394 / Madison 698-R) (Brown rot fungus)).